The following is a 541-amino-acid chain: 3-oxoacyl-[acyl-carrier-protein] synthase II, chloroplastic (541 aa).

The transit peptide at 1–103 (MVGASSSYAS…NRNQRRLNRA (103 aa)) directs the protein to the chloroplast. A Ketosynthase family 3 (KS3) domain is found at 129 to 539 (QRRVVVTGMG…GHNSSIIFAP (411 aa)). Residues C292, H432, and H468 each act as for beta-ketoacyl synthase activity in the active site.

It belongs to the thiolase-like superfamily. Beta-ketoacyl-ACP synthases family. As to quaternary structure, homodimer. As to expression, mostly expressed in siliques, and, to a lower extent, in leaves, stems, flower buds, and flowers.

Its subcellular location is the plastid. The protein resides in the chloroplast stroma. The enzyme catalyses a fatty acyl-[ACP] + malonyl-[ACP] + H(+) = a 3-oxoacyl-[ACP] + holo-[ACP] + CO2. In terms of biological role, essential protein that catalyzes the condensation reaction of fatty acid synthesis by the addition to an acyl acceptor of two carbons from malonyl-ACP. Specific for elongation from C-16 and C-16 to unsaturated C-18 fatty acids. Confers resistance to low temperatures by maintaining chloroplast membranes integrity. Involved in the regulation of fatty acids ratios during seed metabolism. Required for embryo development, especially at the transition from the globular to the heart stage. The protein is 3-oxoacyl-[acyl-carrier-protein] synthase II, chloroplastic (KAS2) of Arabidopsis thaliana (Mouse-ear cress).